We begin with the raw amino-acid sequence, 655 residues long: MLPKIFYLSLLPAALGHPHLQPRLDNGLARTPQMGWNTYNHYSCSPNETIVRSNAQALVDLGLASLGYRYVTTDCGWTVADRLSDGSLTWNETLFPEGFPALGKYLHDLDLLFGVYQDSGIKLCGSPPDNVGNYEDQDARTFASWEVDSLKYDNCYSDAATGYPNVNYEPSTSPQPRFANMSRALAAQNRSMVFQVCEWGIDFPARWAPALGHSWRIGNDIIPHWRAIYRTLNQAVPQTSFAGPGQWPDLDMLFVGNDILSIPEEQTHFSLWAILKSPLTIGAALKDDETSINDESLQILKQADIIGYNQDSLGVSASLRRRWTEEGYEVWSGPLSGGRTVAALINWRNESRDLTLDLPDIGLQYAGTVKNIWDGTTAQNVKTSYTAKVQGHGTILLELQDTTASGQYPGDTFATSTGSSTTFESIYGVTTSFRYNITVKLSEASSSSDVKIQSTASNKTITAQVSASGTEASAQIPLLAGSSNSITIVSPQSVDAITITPPNGTYFPNTAFTTIGDADTVSCGAGYCQPVGSKIGNISTNGTARAVIPATAGTKYLAIDYINNDVAFDSAWDWGSNSRNLTVSVNGNKPVRIEVPLSGQHSELFGPGKGWWDTATIGVLTEGWKDGDNDVVIGNEGGESGFTSYGPDFVGLRVL.

Residues 1–16 (MLPKIFYLSLLPAALG) form the signal peptide. N-linked (GlcNAc...) asparagine glycans are attached at residues N47 and N91. Cysteines 124 and 155 form a disulfide. The Nucleophile role is filled by D153. Residues N180 and N189 are each glycosylated (N-linked (GlcNAc...) asparagine). Position 198 to 202 (198 to 202 (EWGID)) interacts with substrate. D220 acts as the Proton donor in catalysis. Residues N349, N436, N458, N503, N537, N541, and N580 are each glycosylated (N-linked (GlcNAc...) asparagine).

It belongs to the glycosyl hydrolase 27 family.

Its subcellular location is the secreted. It catalyses the reaction Hydrolysis of terminal, non-reducing alpha-D-galactose residues in alpha-D-galactosides, including galactose oligosaccharides, galactomannans and galactolipids.. Its function is as follows. Hydrolyzes a variety of simple alpha-D-galactoside as well as more complex molecules such as oligosaccharides and polysaccharides. The sequence is that of Probable alpha-galactosidase D (aglD) from Aspergillus flavus (strain ATCC 200026 / FGSC A1120 / IAM 13836 / NRRL 3357 / JCM 12722 / SRRC 167).